The following is a 433-amino-acid chain: MQVSVETTEGLGRRVNITVTADSIEKAVESELRNVAKKARIDGFRKGKVPMNIVAQRYGASVRQDVLGDLMQRNFVDAIIKEKLNPVGAPKYVPGEYKLGEDFAYAVEFEVYPEIELKGLDTIVVEKPQVDVNDADVDAMIETLRKQQASWSVKEGEVGAEDRATIDFTGSIDGEAFEGGKATDFVLAMGQGRMIPGFEDGILGHKAGEEFVIDVTFPEDYHAENLKGKAAKFDIVLKKVEERELPEMTAEFIKRFGVADGSLDGLKAEVRKNMTRELKNAVRNRIKAQVLDGLVLANEIDVPAALVDGEIDVLRRQAAQRFGGNEQQAMELPRELFEEQAKRRVIVGLLLGEVISKSELKADDARVNALIEEMASAYEDPQEVIEFYSKNKELMNNMRNMALEEQAVEALLSQAQVSEKATTFNELMNQPQA.

The 86-residue stretch at 161-246 (EDRATIDFTG…LKKVEERELP (86 aa)) folds into the PPIase FKBP-type domain.

It belongs to the FKBP-type PPIase family. Tig subfamily.

It localises to the cytoplasm. It catalyses the reaction [protein]-peptidylproline (omega=180) = [protein]-peptidylproline (omega=0). In terms of biological role, involved in protein export. Acts as a chaperone by maintaining the newly synthesized protein in an open conformation. Functions as a peptidyl-prolyl cis-trans isomerase. The chain is Trigger factor from Edwardsiella ictaluri (strain 93-146).